The primary structure comprises 412 residues: ATP phosphoribosyltransferase regulatory subunit (412 aa).

It belongs to the class-II aminoacyl-tRNA synthetase family. HisZ subfamily. Heteromultimer composed of HisG and HisZ subunits.

It localises to the cytoplasm. Its pathway is amino-acid biosynthesis; L-histidine biosynthesis; L-histidine from 5-phospho-alpha-D-ribose 1-diphosphate: step 1/9. In terms of biological role, required for the first step of histidine biosynthesis. May allow the feedback regulation of ATP phosphoribosyltransferase activity by histidine. The chain is ATP phosphoribosyltransferase regulatory subunit from Dehalococcoides mccartyi (strain ATCC BAA-2100 / JCM 16839 / KCTC 5957 / BAV1).